A 399-amino-acid polypeptide reads, in one-letter code: Phosphoglycerate kinase (399 aa).

Substrate contacts are provided by residues 21–23 (DFN), arginine 36, 59–62 (HLGR), arginine 120, and arginine 158. Residues lysine 209, glycine 297, glutamate 328, and 355–358 (GGDS) contribute to the ATP site.

It belongs to the phosphoglycerate kinase family. Monomer.

It is found in the cytoplasm. The catalysed reaction is (2R)-3-phosphoglycerate + ATP = (2R)-3-phospho-glyceroyl phosphate + ADP. Its pathway is carbohydrate degradation; glycolysis; pyruvate from D-glyceraldehyde 3-phosphate: step 2/5. The chain is Phosphoglycerate kinase from Streptococcus suis (strain 05ZYH33).